The sequence spans 1088 residues: RNA-directed RNA polymerase (1088 aa).

One can recognise a RdRp catalytic domain in the interval 501–687; sequence LSYGDVTRFL…AKRYIAGGKI (187 aa).

This sequence belongs to the reoviridae RNA-directed RNA polymerase family. Interacts with VP3 (Potential). Interacts with VP2; this interaction activates VP1. Interacts with NSP5; this interaction is probably necessary for the formation of functional virus factories. Interacts with NSP2; this interaction is weak. Requires Mg(2+) as cofactor.

The protein localises to the virion. The enzyme catalyses RNA(n) + a ribonucleoside 5'-triphosphate = RNA(n+1) + diphosphate. Its function is as follows. RNA-directed RNA polymerase that is involved in both transcription and genome replication. Together with VP3 capping enzyme, forms an enzyme complex positioned near the channels situated at each of the five-fold vertices of the core. Following infection, the outermost layer of the virus is lost, leaving a double-layered particle (DLP) made up of the core and VP6 shell. VP1 then catalyzes the transcription of fully conservative plus-strand genomic RNAs that are extruded through the DLP's channels into the cytoplasm where they function as mRNAs for translation of viral proteins. One copy of each of the viral (+)RNAs is also recruited during core assembly, together with newly synthesized polymerase complexes and VP2. The polymerase of these novo-formed particles catalyzes the synthesis of complementary minus-strands leading to dsRNA formation. To do so, the polymerase specifically recognizes and binds 4 bases 5'-UGUG-3' in the conserved 3'-sequence of plus-strand RNA templates. VP2 presumably activates the autoinhibited VP1-RNA complex to coordinate packaging and genome replication. Once dsRNA synthesis is complete, the polymerase switches to the transcriptional mode, thus providing secondary transcription. The sequence is that of RNA-directed RNA polymerase from Sus scrofa (Pig).